Consider the following 640-residue polypeptide: tRNA uridine 5-carboxymethylaminomethyl modification enzyme MnmG (640 aa).

9–14 is a binding site for FAD; it reads GGGHAG. Position 289-303 (289-303) interacts with NAD(+); it reads GPRYCPSIEDKINKF.

It belongs to the MnmG family. In terms of assembly, homodimer. Heterotetramer of two MnmE and two MnmG subunits. Requires FAD as cofactor.

The protein localises to the cytoplasm. NAD-binding protein involved in the addition of a carboxymethylaminomethyl (cmnm) group at the wobble position (U34) of certain tRNAs, forming tRNA-cmnm(5)s(2)U34. The polypeptide is tRNA uridine 5-carboxymethylaminomethyl modification enzyme MnmG (Campylobacter hominis (strain ATCC BAA-381 / DSM 21671 / CCUG 45161 / LMG 19568 / NCTC 13146 / CH001A)).